Reading from the N-terminus, the 237-residue chain is Germination-specific N-acetylmuramoyl-L-alanine amidase (237 aa).

An N-terminal signal peptide occupies residues 1–27; it reads MRKKLKWLSFLLGFIILLFLFKYQFSN. The MurNAc-LAA domain occupies 43-226; sequence IYLDPGHGGP…VASSIYKGIL (184 aa).

The protein belongs to the N-acetylmuramoyl-L-alanine amidase 3 family.

Its subcellular location is the secreted. It catalyses the reaction Hydrolyzes the link between N-acetylmuramoyl residues and L-amino acid residues in certain cell-wall glycopeptides.. Its function is as follows. Cleaves the peptide side chain from the N-acetylmuramic acid residues in peptidoglycan. This is a step in the formation of muramic delta-lactam residues in spore cortex. The protein is Germination-specific N-acetylmuramoyl-L-alanine amidase (cwlD) of Bacillus subtilis (strain 168).